A 1018-amino-acid polypeptide reads, in one-letter code: Isoleucine--tRNA ligase (1018 aa).

A 'HIGH' region motif is present at residues 43–53; it reads PYTTGRIHLGT. Positions 586–590 match the 'KMSKS' region motif; that stretch reads KMSKS. Lysine 589 is an ATP binding site.

This sequence belongs to the class-I aminoacyl-tRNA synthetase family. IleS type 2 subfamily. In terms of assembly, monomer. Zn(2+) is required as a cofactor.

It is found in the cytoplasm. The catalysed reaction is tRNA(Ile) + L-isoleucine + ATP = L-isoleucyl-tRNA(Ile) + AMP + diphosphate. Catalyzes the attachment of isoleucine to tRNA(Ile). As IleRS can inadvertently accommodate and process structurally similar amino acids such as valine, to avoid such errors it has two additional distinct tRNA(Ile)-dependent editing activities. One activity is designated as 'pretransfer' editing and involves the hydrolysis of activated Val-AMP. The other activity is designated 'posttransfer' editing and involves deacylation of mischarged Val-tRNA(Ile). This Archaeoglobus fulgidus (strain ATCC 49558 / DSM 4304 / JCM 9628 / NBRC 100126 / VC-16) protein is Isoleucine--tRNA ligase.